We begin with the raw amino-acid sequence, 100 residues long: Urease subunit gamma (100 aa).

It belongs to the urease gamma subunit family. As to quaternary structure, heterotrimer of UreA (gamma), UreB (beta) and UreC (alpha) subunits. Three heterotrimers associate to form the active enzyme.

Its subcellular location is the cytoplasm. It carries out the reaction urea + 2 H2O + H(+) = hydrogencarbonate + 2 NH4(+). The protein operates within nitrogen metabolism; urea degradation; CO(2) and NH(3) from urea (urease route): step 1/1. The polypeptide is Urease subunit gamma (Verminephrobacter eiseniae (strain EF01-2)).